Consider the following 360-residue polypeptide: Dihydroorotate dehydrogenase (quinone) (360 aa).

FMN-binding positions include Ala67–Lys71 and Thr91. Lys71 provides a ligand contact to substrate. Residue Asn116–Phe120 participates in substrate binding. Asn145 and Asn176 together coordinate FMN. Asn176 is a substrate binding site. The Nucleophile role is filled by Ser179. Asn181 lines the substrate pocket. 2 residues coordinate FMN: Lys222 and Ser250. Residue Asn251–Thr252 coordinates substrate. Residues Gly272, Gly301, and Tyr322 to Ser323 contribute to the FMN site.

The protein belongs to the dihydroorotate dehydrogenase family. Type 2 subfamily. Monomer. FMN serves as cofactor.

The protein localises to the cell membrane. The catalysed reaction is (S)-dihydroorotate + a quinone = orotate + a quinol. The protein operates within pyrimidine metabolism; UMP biosynthesis via de novo pathway; orotate from (S)-dihydroorotate (quinone route): step 1/1. Functionally, catalyzes the conversion of dihydroorotate to orotate with quinone as electron acceptor. This is Dihydroorotate dehydrogenase (quinone) from Deinococcus deserti (strain DSM 17065 / CIP 109153 / LMG 22923 / VCD115).